The sequence spans 74 residues: uncharacterized protein (74 aa).

A coiled-coil region spans residues 25–62 (QQTIDRLAGLELRMKQLIRAIEVNNELLRTMQEQQNRV).

This is an uncharacterized protein from Bacillus subtilis (strain 168).